A 534-amino-acid polypeptide reads, in one-letter code: Tyrosine-protein kinase Fyn (534 aa).

Gly2 carries N-myristoyl glycine lipidation. S-palmitoyl cysteine attachment occurs at residues Cys3 and Cys6. Position 12 is a phosphothreonine; by PKC (Thr12). The segment at 15–39 (TDERDGSLTQSSGYRYGTDPTPQHY) is disordered. One can recognise an SH3 domain in the interval 82 to 143 (TGVTLFEALY…PSNYVAPVDS (62 aa)). Residues 149–246 (WYFGKLGRKD…GLCFNLTVIA (98 aa)) form the SH2 domain. A Protein kinase domain is found at 268-521 (LFLEQKLGQG…YLQGFLEDYF (254 aa)). ATP is bound by residues 274–282 (LGQGCFAEV) and Lys296. The active-site Proton acceptor is the Asp387. The residue at position 417 (Tyr417) is a Phosphotyrosine; by autocatalysis. Tyr528 carries the post-translational modification Phosphotyrosine.

The protein belongs to the protein kinase superfamily. Tyr protein kinase family. SRC subfamily. Associates through its SH3 domain, to the p85 subunit of phosphatidylinositol 3-kinase. The cofactor is Mn(2+). In terms of tissue distribution, thymus and spleen.

It localises to the cytoplasm. It is found in the nucleus. The protein localises to the cell membrane. The protein resides in the perikaryon. It carries out the reaction L-tyrosyl-[protein] + ATP = O-phospho-L-tyrosyl-[protein] + ADP + H(+). Inhibited by phosphorylation of Tyr-528 by leukocyte common antigen and activated by dephosphorylation of this site. Its function is as follows. Tyrosine-protein kinase implicated in the control of cell growth. Plays a role in the regulation of intracellular calcium levels. Required in brain development and mature brain function with important roles in the regulation of axon growth, axon guidance, and neurite extension. Role in CNTN1-mediated signaling. The polypeptide is Tyrosine-protein kinase Fyn (FYN) (Gallus gallus (Chicken)).